A 123-amino-acid chain; its full sequence is WAP four-disulfide core domain protein 5 (123 aa).

The first 24 residues, 1 to 24, serve as a signal peptide directing secretion; that stretch reads MRIQSLLLLGALLAVGSQPPAAFG. 2 consecutive WAP domains span residues 27–73 and 74–121; these read KGEK…CVPR and VSVK…RDPA. Cystine bridges form between cysteine 34/cysteine 62, cysteine 41/cysteine 66, cysteine 49/cysteine 61, cysteine 55/cysteine 70, cysteine 81/cysteine 109, cysteine 88/cysteine 113, cysteine 96/cysteine 108, and cysteine 102/cysteine 117.

Its subcellular location is the secreted. Its function is as follows. Putative acid-stable proteinase inhibitor. In Saimiri boliviensis boliviensis (Bolivian squirrel monkey), this protein is WAP four-disulfide core domain protein 5 (WFDC5).